Consider the following 136-residue polypeptide: FK506-binding protein 2 (136 aa).

An N-terminal signal peptide occupies residues 1-17; the sequence is MLSQIWILFTFMVCVIA. The region spanning 45 to 134 is the PPIase FKBP-type domain; the sequence is GDMVSVHYTG…DFDVELVDIA (90 aa).

It belongs to the FKBP-type PPIase family. FKBP2 subfamily.

It localises to the endoplasmic reticulum. It catalyses the reaction [protein]-peptidylproline (omega=180) = [protein]-peptidylproline (omega=0). With respect to regulation, inhibited by both FK506 and rapamycin. PPIases accelerate the folding of proteins. It catalyzes the cis-trans isomerization of proline imidic peptide bonds in oligopeptides. The sequence is that of FK506-binding protein 2 (FPR2) from Candida glabrata (strain ATCC 2001 / BCRC 20586 / JCM 3761 / NBRC 0622 / NRRL Y-65 / CBS 138) (Yeast).